We begin with the raw amino-acid sequence, 317 residues long: Glutaminase (317 aa).

7 residues coordinate substrate: Ser67, Asn118, Glu162, Asn169, Tyr193, Tyr245, and Val263.

This sequence belongs to the glutaminase family. In terms of assembly, homotetramer.

The catalysed reaction is L-glutamine + H2O = L-glutamate + NH4(+). This is Glutaminase from Brucella canis (strain ATCC 23365 / NCTC 10854 / RM-666).